The primary structure comprises 274 residues: Secreted RxLR effector protein 40 (274 aa).

The N-terminal stretch at 1-21 (MRLYTQVVAASLVATLAIVDS) is a signal peptide. Residues 35–53 (RFLRQDNATVARVSEDGER) carry the RxLR-dEER motif. Asn41, Asn74, and Asn258 each carry an N-linked (GlcNAc...) asparagine glycan.

The protein belongs to the RxLR effector family.

The protein localises to the secreted. The protein resides in the host nucleus. Its subcellular location is the host cytoplasm. In terms of biological role, secreted effector that completely suppresses the host cell death induced by cell death-inducing proteins. The protein is Secreted RxLR effector protein 40 of Plasmopara viticola (Downy mildew of grapevine).